The primary structure comprises 247 residues: MRILLSNDDGYFAPGLNILAQHLAKVADIVVVAPERDRSGASNSLTLDRPLSVHRANNGFYYVNGTPTDCVHLAVTGLLDELPDMVISGINDGANMGDDTIYSGTVAAATEGFLLGVPSFAVSMSRHGVQHFETAAKFMVSLVKRYQKDRFPPPVLLNINVPDVPFDQIKGTEVTRLGKRHKAEPVIKSTTPRGQTVYWIGAAGSAQDAGDGTDFHAVSQNRISITPLQIDLTQYSQREQVKNWLAL.

A divalent metal cation-binding residues include aspartate 8, aspartate 9, serine 39, and asparagine 91.

The protein belongs to the SurE nucleotidase family. A divalent metal cation serves as cofactor.

It localises to the cytoplasm. It carries out the reaction a ribonucleoside 5'-phosphate + H2O = a ribonucleoside + phosphate. Its function is as follows. Nucleotidase that shows phosphatase activity on nucleoside 5'-monophosphates. The protein is 5'-nucleotidase SurE of Methylobacillus flagellatus (strain ATCC 51484 / DSM 6875 / VKM B-1610 / KT).